The chain runs to 179 residues: MHAHGALLELTIGRVVKAHGIGGEVVVEIRTDDPASRFCPGNILRAKDFPRGGPERRYTVVYAREHGARLLVRLAGVSDRDAADALRGSLFVIDSLDLPPIDEPDTYYDHQLEGLQVRTMMGRDVGVVAEVLHTAAGELLAVRCDSGEVLVPFVGAIVKLVSLDDGIVEIDPPKGLLDL.

Residues 103–176 form the PRC barrel domain; it reads EPDTYYDHQL…IVEIDPPKGL (74 aa).

The protein belongs to the RimM family. As to quaternary structure, binds ribosomal protein uS19.

Its subcellular location is the cytoplasm. Functionally, an accessory protein needed during the final step in the assembly of 30S ribosomal subunit, possibly for assembly of the head region. Essential for efficient processing of 16S rRNA. May be needed both before and after RbfA during the maturation of 16S rRNA. It has affinity for free ribosomal 30S subunits but not for 70S ribosomes. This chain is Ribosome maturation factor RimM, found in Mycobacterium leprae (strain Br4923).